Consider the following 193-residue polypeptide: Lipopolysaccharide core heptose(II)-phosphate phosphatase (193 aa).

An N-terminal signal peptide occupies residues 1–25 (MKLKKHVAVLLISFLCLIGLVTQHA).

Belongs to the phosphoglycerate mutase family. Ais subfamily.

It localises to the periplasm. The protein operates within bacterial outer membrane biogenesis; lipopolysaccharide metabolism. In terms of biological role, catalyzes the dephosphorylation of heptose(II) of the outer membrane lipopolysaccharide core. This chain is Lipopolysaccharide core heptose(II)-phosphate phosphatase, found in Escherichia fergusonii (strain ATCC 35469 / DSM 13698 / CCUG 18766 / IAM 14443 / JCM 21226 / LMG 7866 / NBRC 102419 / NCTC 12128 / CDC 0568-73).